The following is a 215-amino-acid chain: MKYQLTALEARVIGCLLEKQVTTPEQYPLSVNGVVTACNQKTNREPVMNLSESEVQEQLDNLVKRHYLRTVSGFGNRVTKYEQRFCNSEFGDLKLSAAEVALITTLLLRGAQTPGELRSRAARMYEFSDMAEVESTLEQLANREDGPFVVRLAREPGKRENRYMHLFSGEVEDQPAVTDMSNAVDGDLQARVEALEIEVAELKQRLDSLLAHLGD.

N6-acetyllysine is present on Lys-80.

This sequence belongs to the UPF0502 family.

The chain is UPF0502 protein YceH from Escherichia coli (strain K12 / MC4100 / BW2952).